We begin with the raw amino-acid sequence, 236 residues long: Purine nucleoside phosphorylase DeoD-type 2 (236 aa).

A purine D-ribonucleoside is bound at residue His-5. Phosphate is bound by residues Gly-21, Arg-25, Arg-44, and Arg-88–Ser-91. A purine D-ribonucleoside contacts are provided by residues Asp-180 to Glu-182 and Ser-204 to Asp-205. The active-site Proton donor is Asp-205.

Belongs to the PNP/UDP phosphorylase family. In terms of assembly, homohexamer; trimer of homodimers.

The catalysed reaction is a purine D-ribonucleoside + phosphate = a purine nucleobase + alpha-D-ribose 1-phosphate. The enzyme catalyses a purine 2'-deoxy-D-ribonucleoside + phosphate = a purine nucleobase + 2-deoxy-alpha-D-ribose 1-phosphate. Functionally, catalyzes the reversible phosphorolytic breakdown of the N-glycosidic bond in the beta-(deoxy)ribonucleoside molecules, with the formation of the corresponding free purine bases and pentose-1-phosphate. This Aliivibrio fischeri (strain ATCC 700601 / ES114) (Vibrio fischeri) protein is Purine nucleoside phosphorylase DeoD-type 2.